The following is a 137-amino-acid chain: uncharacterized protein (137 aa).

Transmembrane regions (helical) follow at residues 14-34, 48-68, 84-104, and 109-129; these read AVVV…GSIS, YHII…SLSI, FFTI…LGLT, and HIPS…LNLF.

It localises to the cell membrane. This is an uncharacterized protein from Methanocaldococcus jannaschii (strain ATCC 43067 / DSM 2661 / JAL-1 / JCM 10045 / NBRC 100440) (Methanococcus jannaschii).